We begin with the raw amino-acid sequence, 235 residues long: Ribosomal RNA small subunit methyltransferase G (235 aa).

Residues glycine 98, methionine 103, 149 to 150 (VE), and arginine 164 contribute to the S-adenosyl-L-methionine site.

This sequence belongs to the methyltransferase superfamily. RNA methyltransferase RsmG family.

It is found in the cytoplasm. The enzyme catalyses guanosine(527) in 16S rRNA + S-adenosyl-L-methionine = N(7)-methylguanosine(527) in 16S rRNA + S-adenosyl-L-homocysteine. In terms of biological role, specifically methylates the N7 position of guanine in position 527 of 16S rRNA. The polypeptide is Ribosomal RNA small subunit methyltransferase G (Cupriavidus metallidurans (strain ATCC 43123 / DSM 2839 / NBRC 102507 / CH34) (Ralstonia metallidurans)).